The sequence spans 276 residues: Large ribosomal subunit protein uL2 (276 aa).

Disordered regions lie at residues 30 to 52 (VKGL…TTSR) and 224 to 257 (VMNP…KGYK). Positions 41–52 (GGRNNHGRTTSR) are enriched in polar residues.

Belongs to the universal ribosomal protein uL2 family. As to quaternary structure, part of the 50S ribosomal subunit. Forms a bridge to the 30S subunit in the 70S ribosome.

One of the primary rRNA binding proteins. Required for association of the 30S and 50S subunits to form the 70S ribosome, for tRNA binding and peptide bond formation. It has been suggested to have peptidyltransferase activity; this is somewhat controversial. Makes several contacts with the 16S rRNA in the 70S ribosome. This Gluconacetobacter diazotrophicus (strain ATCC 49037 / DSM 5601 / CCUG 37298 / CIP 103539 / LMG 7603 / PAl5) protein is Large ribosomal subunit protein uL2.